Here is a 123-residue protein sequence, read N- to C-terminus: Large ribosomal subunit protein bL19 (123 aa).

It belongs to the bacterial ribosomal protein bL19 family.

Functionally, this protein is located at the 30S-50S ribosomal subunit interface and may play a role in the structure and function of the aminoacyl-tRNA binding site. This Ureaplasma parvum serovar 3 (strain ATCC 27815 / 27 / NCTC 11736) protein is Large ribosomal subunit protein bL19.